Reading from the N-terminus, the 73-residue chain is Small ribosomal subunit protein bS18 (73 aa).

It belongs to the bacterial ribosomal protein bS18 family. In terms of assembly, part of the 30S ribosomal subunit. Forms a tight heterodimer with protein bS6.

Functionally, binds as a heterodimer with protein bS6 to the central domain of the 16S rRNA, where it helps stabilize the platform of the 30S subunit. The sequence is that of Small ribosomal subunit protein bS18 from Prochlorococcus marinus (strain MIT 9313).